A 328-amino-acid chain; its full sequence is DNA polymerase III subunit delta' (328 aa).

DNA polymerase III contains a core (composed of alpha, epsilon and theta chains) that associates with a tau subunit. This core dimerizes to form the POLIII' complex. PolIII' associates with the gamma complex (composed of gamma, delta, delta', psi and chi chains) and with the beta chain to form the complete DNA polymerase III complex.

It catalyses the reaction DNA(n) + a 2'-deoxyribonucleoside 5'-triphosphate = DNA(n+1) + diphosphate. Its function is as follows. DNA polymerase III is a complex, multichain enzyme responsible for most of the replicative synthesis in bacteria. This DNA polymerase also exhibits 3' to 5' exonuclease activity. The protein is DNA polymerase III subunit delta' (holB) of Pseudomonas aeruginosa (strain ATCC 15692 / DSM 22644 / CIP 104116 / JCM 14847 / LMG 12228 / 1C / PRS 101 / PAO1).